We begin with the raw amino-acid sequence, 145 residues long: uncharacterized protein (145 aa).

A disordered region spans residues 71–95 (GARGRGRTYTKGGSSRSPASWAEQG).

This is an uncharacterized protein from Homo sapiens (Human).